A 278-amino-acid polypeptide reads, in one-letter code: 4-deoxy-L-threo-5-hexosulose-uronate ketol-isomerase (278 aa).

Residues His196, His198, Glu203, and His245 each contribute to the Zn(2+) site.

It belongs to the KduI family. In terms of assembly, homohexamer. The cofactor is Zn(2+).

It carries out the reaction 5-dehydro-4-deoxy-D-glucuronate = 3-deoxy-D-glycero-2,5-hexodiulosonate. Its pathway is glycan metabolism; pectin degradation; 2-dehydro-3-deoxy-D-gluconate from pectin: step 4/5. Catalyzes the isomerization of 5-dehydro-4-deoxy-D-glucuronate to 3-deoxy-D-glycero-2,5-hexodiulosonate. In Escherichia coli (strain SMS-3-5 / SECEC), this protein is 4-deoxy-L-threo-5-hexosulose-uronate ketol-isomerase.